A 500-amino-acid chain; its full sequence is Aspartyl/glutamyl-tRNA(Asn/Gln) amidotransferase subunit B (500 aa).

This sequence belongs to the GatB/GatE family. GatB subfamily. As to quaternary structure, heterotrimer of A, B and C subunits.

The catalysed reaction is L-glutamyl-tRNA(Gln) + L-glutamine + ATP + H2O = L-glutaminyl-tRNA(Gln) + L-glutamate + ADP + phosphate + H(+). The enzyme catalyses L-aspartyl-tRNA(Asn) + L-glutamine + ATP + H2O = L-asparaginyl-tRNA(Asn) + L-glutamate + ADP + phosphate + 2 H(+). Allows the formation of correctly charged Asn-tRNA(Asn) or Gln-tRNA(Gln) through the transamidation of misacylated Asp-tRNA(Asn) or Glu-tRNA(Gln) in organisms which lack either or both of asparaginyl-tRNA or glutaminyl-tRNA synthetases. The reaction takes place in the presence of glutamine and ATP through an activated phospho-Asp-tRNA(Asn) or phospho-Glu-tRNA(Gln). This Sinorhizobium fredii (strain NBRC 101917 / NGR234) protein is Aspartyl/glutamyl-tRNA(Asn/Gln) amidotransferase subunit B.